Here is a 603-residue protein sequence, read N- to C-terminus: UvrABC system protein C (603 aa).

One can recognise a GIY-YIG domain in the interval 17 to 94; the sequence is TTSGCYKMLN…IKTHKPDYNV (78 aa).

It belongs to the UvrC family. In terms of assembly, interacts with UvrB in an incision complex.

Its subcellular location is the cytoplasm. Functionally, the UvrABC repair system catalyzes the recognition and processing of DNA lesions. UvrC both incises the 5' and 3' sides of the lesion. The N-terminal half is responsible for the 3' incision and the C-terminal half is responsible for the 5' incision. The chain is UvrABC system protein C from Borreliella burgdorferi (strain ATCC 35210 / DSM 4680 / CIP 102532 / B31) (Borrelia burgdorferi).